A 474-amino-acid polypeptide reads, in one-letter code: ATP synthase subunit beta (474 aa).

ATP is bound at residue 158 to 165; sequence GGAGVGKT.

It belongs to the ATPase alpha/beta chains family. As to quaternary structure, F-type ATPases have 2 components, CF(1) - the catalytic core - and CF(0) - the membrane proton channel. CF(1) has five subunits: alpha(3), beta(3), gamma(1), delta(1), epsilon(1). CF(0) has three main subunits: a(1), b(2) and c(9-12). The alpha and beta chains form an alternating ring which encloses part of the gamma chain. CF(1) is attached to CF(0) by a central stalk formed by the gamma and epsilon chains, while a peripheral stalk is formed by the delta and b chains.

It is found in the cell membrane. The enzyme catalyses ATP + H2O + 4 H(+)(in) = ADP + phosphate + 5 H(+)(out). Functionally, produces ATP from ADP in the presence of a proton gradient across the membrane. The catalytic sites are hosted primarily by the beta subunits. In Tropheryma whipplei (strain Twist) (Whipple's bacillus), this protein is ATP synthase subunit beta.